We begin with the raw amino-acid sequence, 256 residues long: Deoxyribose-phosphate aldolase (256 aa).

Catalysis depends on Asp-102, which acts as the Proton donor/acceptor. Lys-165 serves as the catalytic Schiff-base intermediate with acetaldehyde. Residue Lys-197 is the Proton donor/acceptor of the active site.

This sequence belongs to the DeoC/FbaB aldolase family. DeoC type 2 subfamily.

It localises to the cytoplasm. It carries out the reaction 2-deoxy-D-ribose 5-phosphate = D-glyceraldehyde 3-phosphate + acetaldehyde. It functions in the pathway carbohydrate degradation; 2-deoxy-D-ribose 1-phosphate degradation; D-glyceraldehyde 3-phosphate and acetaldehyde from 2-deoxy-alpha-D-ribose 1-phosphate: step 2/2. Its function is as follows. Catalyzes a reversible aldol reaction between acetaldehyde and D-glyceraldehyde 3-phosphate to generate 2-deoxy-D-ribose 5-phosphate. This chain is Deoxyribose-phosphate aldolase, found in Shewanella baltica (strain OS223).